The primary structure comprises 352 residues: Aspartic protease Bla g 2 (352 aa).

An N-terminal signal peptide occupies residues 1 to 19; sequence MIGLKLVTVLFAVATITHA. A propeptide spans 20–24 (removed in mature form); that stretch reads AELQR. In terms of domain architecture, Peptidase A1 spans 39 to 346; that stretch reads YAGITKIGNQ…NWENKTMGFG (308 aa). D55 is a catalytic residue. 3 cysteine pairs are disulfide-bonded: C59-C151, C68-C73, and C75-C136. N-linked (GlcNAc...) asparagine glycosylation occurs at N117. Zn(2+) contacts are provided by H178 and H186. Residue D239 is part of the active site. 2 disulfide bridges follow: C261–C272 and C276–C309. N-linked (GlcNAc...) asparagine glycosylation occurs at N295. Residues D326 and D330 each coordinate Zn(2+). N-linked (GlcNAc...) asparagine glycosylation is present at N340.

The protein belongs to the peptidase A1 family. As to quaternary structure, homodimer.

Functions as a digestive enzyme in the cockroach. The polypeptide is Aspartic protease Bla g 2 (Blattella germanica (German cockroach)).